Reading from the N-terminus, the 279-residue chain is Energy-coupling factor transporter ATP-binding protein EcfA1 (279 aa).

The ABC transporter domain occupies 6 to 240; it reads VRLEHVFYKY…ADAMRAIGLG (235 aa). Residue 40–47 participates in ATP binding; that stretch reads GHNGSGKS.

It belongs to the ABC transporter superfamily. Energy-coupling factor EcfA family. In terms of assembly, forms a stable energy-coupling factor (ECF) transporter complex composed of 2 membrane-embedded substrate-binding proteins (S component), 2 ATP-binding proteins (A component) and 2 transmembrane proteins (T component).

It is found in the cell membrane. Its function is as follows. ATP-binding (A) component of a common energy-coupling factor (ECF) ABC-transporter complex. Unlike classic ABC transporters this ECF transporter provides the energy necessary to transport a number of different substrates. The polypeptide is Energy-coupling factor transporter ATP-binding protein EcfA1 (Listeria innocua serovar 6a (strain ATCC BAA-680 / CLIP 11262)).